Reading from the N-terminus, the 338-residue chain is Glyceraldehyde-3-phosphate dehydrogenase (338 aa).

NAD(+) contacts are provided by residues 11–12 (TI) and glycine 111. 140-142 (SCN) serves as a coordination point for D-glyceraldehyde 3-phosphate. Cysteine 141 functions as the Nucleophile in the catalytic mechanism. Residue arginine 169 coordinates NAD(+). 195–196 (HG) lines the D-glyceraldehyde 3-phosphate pocket. Residue glutamine 302 coordinates NAD(+).

It belongs to the glyceraldehyde-3-phosphate dehydrogenase family. As to quaternary structure, homotetramer.

It localises to the cytoplasm. It carries out the reaction D-glyceraldehyde 3-phosphate + phosphate + NADP(+) = (2R)-3-phospho-glyceroyl phosphate + NADPH + H(+). The enzyme catalyses D-glyceraldehyde 3-phosphate + phosphate + NAD(+) = (2R)-3-phospho-glyceroyl phosphate + NADH + H(+). Its pathway is carbohydrate degradation; glycolysis; pyruvate from D-glyceraldehyde 3-phosphate: step 1/5. This chain is Glyceraldehyde-3-phosphate dehydrogenase (gap), found in Methanobacterium bryantii.